A 92-amino-acid chain; its full sequence is YcgL domain-containing protein ASA_2166 (92 aa).

Residues 1-85 (MLCAVYKSRK…PPENLLEQHK (85 aa)) enclose the YcgL domain.

The protein is YcgL domain-containing protein ASA_2166 of Aeromonas salmonicida (strain A449).